The chain runs to 354 residues: mRNA cap guanine-N(7) methyltransferase 2 (354 aa).

Residues 8–286 (KPEQSHHRLF…LYATFIFQKP (279 aa)) enclose the mRNA cap 0 methyltransferase domain. S-adenosyl-L-methionine contacts are provided by residues Lys21, Asp61, and 88–89 (DP).

Belongs to the class I-like SAM-binding methyltransferase superfamily. mRNA cap 0 methyltransferase family.

It localises to the nucleus. The enzyme catalyses a 5'-end (5'-triphosphoguanosine)-ribonucleoside in mRNA + S-adenosyl-L-methionine = a 5'-end (N(7)-methyl 5'-triphosphoguanosine)-ribonucleoside in mRNA + S-adenosyl-L-homocysteine. Its function is as follows. mRNA capping methyltransferase that methylates the N7 position of the added guanosine to the 5'-cap structure of mRNAs. Binds RNA containing 5'-terminal GpppC. This is mRNA cap guanine-N(7) methyltransferase 2 from Arabidopsis thaliana (Mouse-ear cress).